Consider the following 1188-residue polypeptide: MDFPRGLLVAWTLSLWPGFTDTFNMDTRNPRVIAGPSAAFFGYTVQQHDISGKKWLVVGAPMETNGHQKTGDVYKCPVTQGNCTKLNLGRVTLSNVSERKDNMRLGLSLATNPKDNSFLACSPLWSHECGSSYYTTGMCSRANSNFRFSKTVAPALQRCQTYMDIVIVLDGSNSIYPWVEVQHFLINILKKFYIGPGQIQVGIVQYGEDAVHEFHLNDYRSVKDVVEAASHIEQRGGTETRTAFGIEFARSEAFQKGGRKGAKKVMIVITDGESHDSPDLEKVIRQSEKDNVTRYAVAVLGYYNRRGINPETFLNEIKYIASDPDDKHFFNVTDEAALKDIVDALGDRIFSLEGTNKNETSFGLEMSQTGFSSHVVEDGILLGAVGAYDWNGAVLKETSAGKVIPHRESYLKEFPEELKNHAAYLGYTVTSVVSSRQGRVYVAGAPRFNHTGKVILFSMHNNRSLTIHQALRGEQIGSYFGSEITSVDVNDDRVTDVLLVGAPMYFSEGRERGKVYVYNLRQNRFVYNGTLKDSHSYQNARFGSCIASVQDLNQDSYNDVVVGAPLEDSHRGAIYIFHGFQTNILKKPMQRITASELAPGLQHFGCSIHGQLDLNEDGLVDLAVGALGNAVVLWARPVVQINASLHFEPSKINIFHKDCKRNGRDATCLAAFLCFIPIFLAPHFQTATVGIRYNATMDERRYMPRAHLDEGGDQFTNRAVLLSSGQEHCQRINFHVLDTADYVKPVAFSVEYSLEDPDNGPMLDNGWPTTLRVSVPFWNGCNEDEHCVPDLVLDARSDLPTAMEYCQRVLGRPAQDCSSYTLSFDTTVFIIESTRRRVAVEATLENRGENAYSAVLNISQSENLQFASLIQKDDSDNSIECVNEERRLHKKVCNVSYPFFRAKAKVAFRLDFEFSKSVFLHHLQIHLGAGSDSHEQDSTADDNTALLRFHLKYEADVLFTRSSSLSHFEVKANSSLESYDGIGPPFNCVFKVQNLGFFPIHGVMMKITVPIATRGGNRLLMLRDFFTDQGNTSCNIWGNSTEYRSTPTEEDLSHAPQRNHSNSDVVSIICNLRLAPSQETSFYLVGNLWLTSLKALKYRSLKITVNAALQRQFHSPFIFREEDPSRQVTFEISKQEDWQVPIWIIVGSTLGGLLLLALLVLALWKLGFFKSAKRKREPGLGPIPKELK.

The N-terminal stretch at 1–22 is a signal peptide; the sequence is MDFPRGLLVAWTLSLWPGFTDT. Topologically, residues 23–1141 are extracellular; it reads FNMDTRNPRV…ISKQEDWQVP (1119 aa). FG-GAP repeat units lie at residues 24-85 and 91-151; these read NMDT…NCTK and VTLS…FSKT. Cys-76 and Cys-83 are joined by a disulfide. 2 N-linked (GlcNAc...) asparagine glycosylation sites follow: Asn-82 and Asn-95. 2 cysteine pairs are disulfide-bonded: Cys-121–Cys-139 and Cys-129–Cys-159. The region spanning 164–345 is the VWFA domain; that stretch reads DIVIVLDGSN…AALKDIVDAL (182 aa). Residues Asn-291, Asn-331, Asn-358, Asn-449, and Asn-462 are each glycosylated (N-linked (GlcNAc...) asparagine). FG-GAP repeat units lie at residues 355 to 406, 411 to 461, 462 to 527, 528 to 586, and 590 to 650; these read TNKN…VIPH, LKEF…SMHN, NRSL…RFVY, NGTL…NILK, and QRIT…FEPS. Ca(2+) is bound by residues Asp-488, Asn-490, Asp-492, and Asp-496. N-linked (GlcNAc...) asparagine glycosylation occurs at Asn-528. Ca(2+) contacts are provided by Asp-551, Asn-553, Asp-555, Asp-559, Asp-613, Asn-615, Asp-617, and Asp-621. A glycan (N-linked (GlcNAc...) asparagine) is linked at Asn-642. 3 disulfide bridges follow: Cys-659–Cys-668, Cys-674–Cys-729, and Cys-781–Cys-787. Asn-694 carries an N-linked (GlcNAc...) asparagine glycan. Asn-857 carries an N-linked (GlcNAc...) asparagine glycan. The cysteines at positions 881 and 893 are disulfide-linked. 5 N-linked (GlcNAc...) asparagine glycosylation sites follow: Asn-894, Asn-973, Asn-1031, Asn-1039, and Asn-1059. The chain crosses the membrane as a helical span at residues 1142–1164; that stretch reads IWIIVGSTLGGLLLLALLVLALW. At 1165 to 1188 the chain is on the cytoplasmic side; sequence KLGFFKSAKRKREPGLGPIPKELK.

This sequence belongs to the integrin alpha chain family. Heterodimer of an alpha and a beta subunit. Alpha-11 associates with beta-1. Interacts with RAB21.

Its subcellular location is the membrane. Integrin alpha-11/beta-1 is a receptor for collagen. The sequence is that of Integrin alpha-11 (Itga11) from Mus musculus (Mouse).